We begin with the raw amino-acid sequence, 96 residues long: ATP-dependent Clp protease adapter protein ClpS (96 aa).

The protein belongs to the ClpS family. As to quaternary structure, binds to the N-terminal domain of the chaperone ClpA.

Involved in the modulation of the specificity of the ClpAP-mediated ATP-dependent protein degradation. In Campylobacter jejuni subsp. jejuni serotype O:6 (strain 81116 / NCTC 11828), this protein is ATP-dependent Clp protease adapter protein ClpS.